A 565-amino-acid chain; its full sequence is NAD-dependent malic enzyme (565 aa).

Tyr-104 (proton donor) is an active-site residue. Arg-157 serves as a coordination point for NAD(+). Residue Lys-175 is the Proton acceptor of the active site. Residues Glu-246, Asp-247, and Asp-270 each coordinate a divalent metal cation. 2 residues coordinate NAD(+): Asp-270 and Asn-418.

It belongs to the malic enzymes family. As to quaternary structure, homotetramer. Requires Mg(2+) as cofactor. Mn(2+) is required as a cofactor.

It carries out the reaction (S)-malate + NAD(+) = pyruvate + CO2 + NADH. The enzyme catalyses oxaloacetate + H(+) = pyruvate + CO2. In Escherichia coli (strain K12 / MC4100 / BW2952), this protein is NAD-dependent malic enzyme.